A 127-amino-acid polypeptide reads, in one-letter code: Fluoride-specific ion channel FluC (127 aa).

Helical transmembrane passes span 4–24 (WFWIGLGGAAGTLARYGLSTW) and 36–56 (GTLAVNVIGSFLLGAIGEIAA). 2 residues coordinate Na(+): Gly75 and Thr78. The helical transmembrane segment at 100-120 (LANIAITLVVCLLAGVLGMVV) threads the bilayer.

This sequence belongs to the fluoride channel Fluc/FEX (TC 1.A.43) family.

Its subcellular location is the cell inner membrane. The catalysed reaction is fluoride(in) = fluoride(out). With respect to regulation, na(+) is not transported, but it plays an essential structural role and its presence is essential for fluoride channel function. Functionally, fluoride-specific ion channel. Important for reducing fluoride concentration in the cell, thus reducing its toxicity. In Sorangium cellulosum (strain So ce56) (Polyangium cellulosum (strain So ce56)), this protein is Fluoride-specific ion channel FluC.